Here is a 526-residue protein sequence, read N- to C-terminus: Delayed-rectifier potassium channel regulatory subunit KCNS1 (526 aa).

Residues methionine 1–leucine 217 are Cytoplasmic-facing. Residues proline 218–isoleucine 239 form a helical membrane-spanning segment. Over histidine 240–proline 270 the chain is Extracellular. The helical transmembrane segment at valine 271–leucine 293 threads the bilayer. At alanine 294 to proline 304 the chain is on the cytoplasmic side. A helical membrane pass occupies residues leucine 305–alanine 322. Over glycine 323–leucine 337 the chain is Extracellular. The helical; Voltage-sensor transmembrane segment at glycine 338–histidine 358 threads the bilayer. The Cytoplasmic portion of the chain corresponds to serine 359–tyrosine 373. Residues arginine 374–tyrosine 395 form a helical membrane-spanning segment. The Extracellular segment spans residues threonine 396 to isoleucine 408. The helical intramembrane region spans proline 409–threonine 420. The Selectivity filter motif lies at threonine 421–aspartate 426. The stretch at threonine 421–valine 428 is an intramembrane region. Topologically, residues proline 429–lysine 435 are extracellular. A helical membrane pass occupies residues leucine 436–tyrosine 464. The Cytoplasmic segment spans residues arginine 465–tyrosine 526. Residues glycine 491–tyrosine 526 form a disordered region. Basic and acidic residues predominate over residues threonine 499–aspartate 511.

This sequence belongs to the potassium channel family. S (TC 1.A.1.2) subfamily. Kv9.1/KCNS1 sub-subfamily. Heterotetramer with KCNB1. Heterotetramer with KCNB2. Does not form homomultimers.

The protein localises to the cell membrane. Potassium channel regulatory subunit that modulate the delayed rectifier voltage-gated potassium channel activity of KCNB1 and KCNB2 by altering their kinetics, expression levels, and shifting the half-inactivation potential to more polarized values. While it does not form functional channels on its own, it can form functional heterotetrameric channels with KCNB1 and KCNB2. Each regulatory subunit has unique regulatory properties that can lead to extensive inhibition, significant changes in kinetics, and/or substantial shifts in the voltage dependencies of the inactivation process. The chain is Delayed-rectifier potassium channel regulatory subunit KCNS1 from Pan troglodytes (Chimpanzee).